Reading from the N-terminus, the 1023-residue chain is Cell division cycle-associated protein 2 (1023 aa).

The span at 1 to 14 shows a compositional bias: basic and acidic residues; the sequence is MDANSKDKPPETKE. Residues 1-21 form a disordered region; that stretch reads MDANSKDKPPETKESAMNNAG. 7 positions are modified to phosphoserine: Ser98, Ser120, Ser126, Ser131, Ser210, Ser291, and Ser309. Position 312 is a phosphothreonine (Thr312). The PP1-binding domain occupies 389–449; it reads KRKRVTFGED…PEPLPQPDFD (61 aa). Ser400 and Ser407 each carry phosphoserine. Thr412 carries the post-translational modification Phosphothreonine. At Ser437 the chain carries Phosphoserine. Positions 542 to 580 are disordered; that stretch reads SQETKCTKRALPKKSQVLKSCRKKKGKGKKSVQKSLYGE. Residues 561-573 show a composition bias toward basic residues; that stretch reads SCRKKKGKGKKSV. Phosphoserine is present on residues Ser591 and Ser614. The tract at residues 667–729 is disordered; the sequence is SSLGNATSDE…ERVASDSPKP (63 aa). The segment covering 679–691 has biased composition (low complexity); it reads NTNIMNINENKNI. The segment covering 696–706 has biased composition (basic and acidic residues); that stretch reads NKSESENEPKA. Ser710 and Ser756 each carry phosphoserine. Residue Lys762 forms a Glycyl lysine isopeptide (Lys-Gly) (interchain with G-Cter in SUMO2) linkage. Residues 803 to 816 are compositionally biased toward basic and acidic residues; the sequence is ESKSQSEDLGRKPM. 2 disordered regions span residues 803–860 and 936–1023; these read ESKS…GSSV and SPIK…ERKQ. Ser936 and Ser977 each carry phosphoserine. Polar residues-rich tracts occupy residues 979–992 and 1000–1010; these read CISTLANTKATSQF and SLNGKGESSLT. Phosphoserine is present on Ser1000. Residues 1013 to 1023 show a composition bias toward basic and acidic residues; the sequence is ERIEHNGERKQ.

In terms of assembly, interacts with PPP1CC. Phosphorylated by CDK1. May regulate its subcellular location. In terms of tissue distribution, ubiquitously expressed.

Its subcellular location is the nucleus. Its function is as follows. Regulator of chromosome structure during mitosis required for condensin-depleted chromosomes to retain their compact architecture through anaphase. Acts by mediating the recruitment of phopsphatase PP1-gamma subunit (PPP1CC) to chromatin at anaphase and into the following interphase. At anaphase onset, its association with chromatin targets a pool of PPP1CC to dephosphorylate substrates. The protein is Cell division cycle-associated protein 2 (CDCA2) of Homo sapiens (Human).